We begin with the raw amino-acid sequence, 479 residues long: Probable polyamine transporter At3g19553 (479 aa).

The next 12 membrane-spanning stretches (helical) occupy residues 22-42 (LTLL…PFGV), 53-73 (LLAL…EALV), 86-106 (GYVV…EGFW), 130-150 (FPVL…TFSL), 160-180 (IVGF…VVMA), 236-256 (ALFG…MAGT), 275-295 (VGML…AAMS), 304-324 (MSSD…PAFF), 332-352 (TPTI…WMSF), 355-375 (IIEF…AAFV), 395-415 (FGVS…MVLA), and 420-440 (FLIS…LTLV). Residues 454–479 (RPVSGVSSESQLDEEHGDESAASLLP) form a disordered region.

Belongs to the amino acid-polyamine-organocation (APC) superfamily. Polyamine:cation symporter (PHS) (TC 2.A.3.12) family.

The protein resides in the cell membrane. In terms of biological role, probable cell membrane polyamine/proton symporter involved in the polyamine uptake in cells. This Arabidopsis thaliana (Mouse-ear cress) protein is Probable polyamine transporter At3g19553.